Here is a 1561-residue protein sequence, read N- to C-terminus: Formin-E (1561 aa).

Over residues 1–28 (MDNHSSSSNPSSLSSSSSSSSSSSSFLS) the composition is skewed to low complexity. Disordered stretches follow at residues 1 to 63 (MDNH…EEKP), 77 to 187 (EEEE…GKLS), 211 to 279 (PIIV…SSED), and 305 to 365 (ILRS…NLNY). A compositionally biased stretch (basic and acidic residues) spans 29-51 (DHVKKEEQNGLDTIKEEIENKIE). Residues 32-85 (KKEEQNGLDTIKEEIENKIENEEEEEKIEEKPIEKVEEEKIIVQKEEEEKIEEE) are a coiled coil. The span at 80–89 (EKIEEEPIEK) shows a compositional bias: acidic residues. Polar residues predominate over residues 103-120 (DNINTTVEAKTLETSTEP). Residues 158 to 208 (EQQEQQEKQKEETKPSIREEVKEKIKGKLSEIKEEIKDIKEEIKHVIREEV) are a coiled coil. Positions 162–187 (QQEKQKEETKPSIREEVKEKIKGKLS) are enriched in basic and acidic residues. Pro residues predominate over residues 220-229 (SPPPPPPPPS). Residues 230 to 258 (ITVQSSSPVSSQISSPVSSPVSSPKPSVT) show a composition bias toward low complexity. Residues 305-320 (ILRSKSSPNPGANNPN) show a composition bias toward polar residues. The span at 326 to 365 (NNSSSSSSSNNNSDNNNNSDNNSNNNNINNNNSSSNNLNY) shows a compositional bias: low complexity. The Phorbol-ester/DAG-type zinc-finger motif lies at 379–427 (YHDFKIHRGTSSCVYCGENTRLWSTSYKCFFCGVVCHKKCLDSMNTIPC). Positions 465-534 (PSSITNSSSK…TSISSPPIAS (70 aa)) are enriched in low complexity. The disordered stretch occupies residues 465–549 (PSSITNSSSK…PLLQQQQQQQ (85 aa)). Residues 541-573 (LLQQQQQQQQQQQQQQQQQQQQQQQQQQISTTQ) adopt a coiled-coil conformation. The region spanning 581 to 929 (SEKPDDDMIN…QISLHKGGFE (349 aa)) is the GBD/FH3 domain. Residues 952 to 989 (LNRKLGELEKQNIDKAMKIQEQDINIKSLLDLLKQLKD) adopt a coiled-coil conformation. Disordered stretches follow at residues 1009–1092 (MEPP…VPKP), 1466–1508 (EEKR…SDED), and 1526–1561 (RQAK…PNKN). Positions 1017–1033 (SVKSPDDPNNAAPIVVA) are enriched in low complexity. The FH1 domain occupies 1019–1081 (KSPDDPNNAA…LGAKKPPAGV (63 aa)). The span at 1034-1070 (PIPPPPPPISGAPPPPPPPPPPMKGGAGPPPPPPPPG) shows a compositional bias: pro residues. Residues 1071–1081 (KLGAKKPPAGV) show a composition bias toward low complexity. Residues 1086–1475 (PPKVPKPSHP…EEKRLQQKQQ (390 aa)) form the FH2 domain. A coiled-coil region spans residues 1398 to 1491 (LATASTEVEK…RKLTTSNESA (94 aa)). A compositionally biased stretch (basic and acidic residues) spans 1466-1481 (EEKRLQQKQQRQERAV). Composition is skewed to polar residues over residues 1484–1498 (LTTS…PNHA) and 1536–1561 (HQIA…PNKN). Residues 1488–1518 (NESASASPNHAKSTDDKSDEDDDIVNDLLMA) form the DAD domain.

This sequence belongs to the formin homology family. Diaphanous subfamily. As to quaternary structure, interacts (via GBD/FH3 domain) with activated Rho-GTPases.

Its function is as follows. Formins play an important role in the nucleation of actin and the formation of linear actin filaments. This Dictyostelium discoideum (Social amoeba) protein is Formin-E (forE).